The chain runs to 252 residues: 3-dehydroquinate dehydratase (252 aa).

3-dehydroquinate-binding positions include Ser-21, 46-48 (EWR), and Arg-82. Residue His-143 is the Proton donor/acceptor of the active site. The active-site Schiff-base intermediate with substrate is Lys-170. 3-dehydroquinate contacts are provided by Arg-213, Ser-232, and Gln-236.

This sequence belongs to the type-I 3-dehydroquinase family. As to quaternary structure, homodimer.

The enzyme catalyses 3-dehydroquinate = 3-dehydroshikimate + H2O. Its pathway is metabolic intermediate biosynthesis; chorismate biosynthesis; chorismate from D-erythrose 4-phosphate and phosphoenolpyruvate: step 3/7. Its function is as follows. Involved in the third step of the chorismate pathway, which leads to the biosynthesis of aromatic amino acids. Catalyzes the cis-dehydration of 3-dehydroquinate (DHQ) and introduces the first double bond of the aromatic ring to yield 3-dehydroshikimate. The chain is 3-dehydroquinate dehydratase from Escherichia coli (strain SE11).